The chain runs to 151 residues: MKIWVDADACPVVIKEILFRAAERTQTETILVANHAMRIPPSKYISRLQVSSGFDVADDEIVKRIAKGDLVITGDIPLASEVIDNGGQALNPRGELYTTENIRSILNVRDFMDTMRSSGVEMSGGPPPLSQTDRQNFANNLDRILAQNKAG.

Belongs to the UPF0178 family.

The polypeptide is UPF0178 protein PSHAb0045 (Pseudoalteromonas translucida (strain TAC 125)).